The sequence spans 1085 residues: Extracellular calcium-sensing receptor (1085 aa).

The first 19 residues, 1–19 (MALYSCCWILLAFSTWCTS), serve as a signal peptide directing secretion. The Extracellular segment spans residues 20 to 611 (AYGPDQRAQK…KEIEFLSWTE (592 aa)). The tract at residues 23 to 189 (PDQRAQKKGD…QFKSFLRTIP (167 aa)) is ligand-binding 1 (LB1). Residues Cys-61 and Cys-102 are joined by a disulfide bond. 67 to 71 (RGFRW) contributes to the phosphate binding site. 4 residues coordinate Ca(2+): Ile-82, Ser-85, Leu-88, and Leu-89. Asn-91 carries an N-linked (GlcNAc...) asparagine glycan. Thr-101 lines the Ca(2+) pocket. Asn-131 is a glycosylation site (N-linked (GlcNAc...) asparagine). Thr-146 provides a ligand contact to Ca(2+). Positions 148, 169, and 171 each coordinate L-tryptophan. 5 residues coordinate Ca(2+): Ser-171, Pro-189, Asp-191, Glu-232, and Asp-235. The interval 190–325 (NDEHQATAMA…GGTIGFGLKA (136 aa)) is ligand-binding 2 (LB2). 7 cysteine pairs are disulfide-bonded: Cys-237/Cys-562, Cys-359/Cys-396, Cys-438/Cys-450, Cys-543/Cys-563, Cys-547/Cys-566, Cys-569/Cys-583, and Cys-586/Cys-599. Residues Asp-239 and Ser-241 each coordinate spermine. N-linked (GlcNAc...) asparagine glycosylation is found at Asn-262 and Asn-288. Residue Glu-298 coordinates Ca(2+). L-tryptophan is bound at residue Glu-298. A glycan (N-linked (GlcNAc...) asparagine) is linked at Asn-401. Residue 416-418 (RIS) coordinates phosphate. N-linked (GlcNAc...) asparagine glycosylation is found at Asn-447, Asn-469, and Asn-489. Position 490 (Tyr-490) interacts with Ca(2+). N-linked (GlcNAc...) asparagine glycosylation is present at Asn-542. A cysteine-rich (CR) region spans residues 543–613 (CSRDCLAGTR…IEFLSWTEPF (71 aa)). Ca(2+) is bound at residue Gly-558. N-linked (GlcNAc...) asparagine glycosylation is present at Asn-595. Residues 612–637 (PFGIALTLFAVLGIFLTAFVLGVFIK) form a helical membrane-spanning segment. Residues 638 to 649 (FRNTPIVKATNR) are Cytoplasmic-facing. The segment at 638–649 (FRNTPIVKATNR) is intracellular loop 1 (ICL1). Residues 650 to 669 (ELSYLLLFSLLCCFSSSLFF) traverse the membrane as a helical segment. The Extracellular segment spans residues 670–675 (IGEPQD). Residues 676–699 (WTCRLRQPAFGISFVLCISCILVK) traverse the membrane as a helical segment. Over 700-723 (TNRVLLVFEAKIPTSFHRKWWGLN) the chain is Cytoplasmic. Positions 700 to 723 (TNRVLLVFEAKIPTSFHRKWWGLN) are intracellular loop 2 (ICL2). The chain crosses the membrane as a helical span at residues 724–746 (LQFLLVFLCTFMQIVICAIWLNT). The Extracellular segment spans residues 747 to 770 (APPSSYRNHELEDEIIFITCHEGS). A helical membrane pass occupies residues 771-790 (LMALGFLIGYTCLLAAICFF). The Cytoplasmic segment spans residues 791-806 (FAFKSRKLPENFNEAK). The segment at 791 to 806 (FAFKSRKLPENFNEAK) is intracellular loop 3 (ICL3). A helical membrane pass occupies residues 807–829 (FITFSMLIFFIVWISFIPAYAST). Residues 830-833 (YGKF) are Extracellular-facing. The helical transmembrane segment at 834 to 855 (VSAVEVIAILAASFGLLACIFF) threads the bilayer. Residues 856–1085 (NKVYIILFKP…STVTENMLRS (230 aa)) are Cytoplasmic-facing. The interval 856-1085 (NKVYIILFKP…STVTENMLRS (230 aa)) is C-terminus. An interaction with RNF19A region spans residues 881 to 901 (AFKVAARATLRRSNVSRQRSS). Residue Thr-889 is modified to Phosphothreonine. An arginine-rich retention motif region spans residues 891–899 (RRSNVSRQR). Phosphoserine occurs at positions 893, 900, and 921. Low complexity predominate over residues 893–938 (SNVSRQRSSSLGGSTGSTPSSSISSKSNSEDPFPQQQPKRQKQPQP). Disordered regions lie at residues 893 to 969 (SNVS…PPRC) and 1034 to 1058 (SQET…EEMS). Residues 950–960 (QPRPPSTPQPQ) are compositionally biased toward pro residues. Ser-1068 is subject to Phosphoserine.

The protein belongs to the G-protein coupled receptor 3 family. Homodimer; disulfide-linked. Interacts with VCP. Interacts with ARRB1. Post-translationally, phosphorylation at Thr-889 by PKC impairs coupling with G(q)/G(11) G-proteins, while it does not affect G(i)/G(o)-coupling. Phosphorylation at Ser-893 by PKC and Ser-900 by PKA promote plasma membrane localization. In terms of processing, ubiquitinated by RNF19A; which induces proteasomal degradation.

It localises to the cell membrane. With respect to regulation, in resting state, adopts an open conformation, anion-binding promoting the inactive configuration. Upon aromatic amino acid-binding, the groove in the extracellular venus flytrap module is closed, thereby inducing the formation of a novel homodimer interface between subunits. Calcium ions stabilize the active state by enhancing homodimer interactions between membrane-proximal domains to fully activate the receptor. Upon activation, the homodimer adopts an asymmetric configuration of the 7-transmembrane region that primes one protomer for G-protein coupling. G-protein binding expands the transmembrane dimer interface; the restriction imposed by the receptor dimer, in combination with intracellular loop 2 (ICL2), enables G-protein activation by facilitating conformational transition of G-protein alpha. Coupling to different classes of G-proteins results in distinct CASR-G-protein interfaces. In terms of biological role, G-protein-coupled receptor that senses changes in the extracellular concentration of calcium ions and plays a key role in maintaining calcium homeostasis. Senses fluctuations in the circulating calcium concentration: activated by elevated circulating calcium, leading to decreased parathyroid hormone (PTH) secretion in parathyroid glands. In kidneys, acts as a key regulator of renal tubular calcium resorption. Ligand binding causes a conformation change that triggers signaling via guanine nucleotide-binding proteins (G-proteins) and modulates the activity of downstream effectors. CASR is coupled with different G(q)/G(11), G(i)/G(o)- or G(s)-classes of G-proteins depending on the context. In the parathyroid and kidney, CASR signals through G(q)/G(11) and G(i)/G(o) G-proteins: G(q)/G(11) coupling activates phospholipase C-beta, releasing diacylglycerol (DAG) and inositol 1,4,5-trisphosphate (IP3) second messengers, while G(i)/G(o) coupling mediates inhibition of adenylate cyclase activity. The G-protein-coupled receptor activity is activated by a co-agonist mechanism: aromatic amino acids, such as Trp or Phe, act concertedly with divalent cations, such as calcium or magnesium, to achieve full receptor activation. Acts as an activator of the NLRP3 inflammasome via G(i)/G(o)-mediated signaling: down-regulation of cyclic AMP (cAMP) relieving NLRP3 inhibition by cAMP. Acts as a regulator of proton-sensing receptor GPR68 in a seesaw manner: CASR-mediated signaling inhibits GPR68 signaling in response to extracellular calcium, while GPR68 inhibits CASR in presence of extracellular protons. This is Extracellular calcium-sensing receptor (CASR) from Bos taurus (Bovine).